Reading from the N-terminus, the 735-residue chain is Transcription initiation factor IIF subunit alpha (735 aa).

Disordered stretches follow at residues 1-68, 165-263, 297-323, 446-465, 471-606, and 631-674; these read MSRR…EYAE, EYKK…TANL, NEPE…AKRG, KAVA…NSEV, EEFA…HKEP, and PEGE…EETP. A compositionally biased stretch (low complexity) spans 33–54; sequence RMRMGQNGSNSSSPGVPNGDNS. Basic and acidic residues-rich tracts occupy residues 59 to 68 and 165 to 174; these read VKKDDPEYAE and EYKKKAEQER. Positions 175–219 are enriched in polar residues; the sequence is STPNSGGMNKSGTVSLNNTVKDGSQTPTVDSVTKDNTANGVNSSI. Serine 198 is modified (phosphoserine). Phosphothreonine is present on threonine 200. A compositionally biased stretch (low complexity) spans 220–238; that stretch reads PTVTGSSVPPASPTTVSAV. Polar residues predominate over residues 239–263; it reads ESNGLSNGSTSAANGLDGNASTANL. 2 stretches are compositionally biased toward acidic residues: residues 453–465 and 471–480; these read AMDE…NSEV and EEFADDEEAP. Residues 487 to 500 show a composition bias toward basic and acidic residues; sequence QENKESEQRIKKEM. Acidic residues predominate over residues 513–522; it reads APSENEEDEL. A Phosphoserine modification is found at serine 515. Over residues 523-536 the composition is skewed to basic and acidic residues; it reads FGEKKIDEDGERIK. Phosphoserine is present on residues serine 560, serine 562, and serine 571. Basic and acidic residues predominate over residues 564 to 583; sequence IENKENESPVKKEEDSDTLS. Residues 584–595 are compositionally biased toward basic residues; the sequence is KSKRSSPKKQQK. Residues 636-654 are compositionally biased toward polar residues; sequence NPQTTKAVDSSNNASNTVP. Phosphoserine is present on serine 655.

Belongs to the TFIIF alpha subunit family. TFIIF is composed of three different subunits: TFG1/RAP74, TFG2/RAP30 and TAF14. Phosphorylated on Ser and other residues by TAF1 and casein kinase II-like kinases.

It is found in the nucleus. In terms of biological role, TFIIF is a general transcription initiation factor that binds to RNA polymerase II. Its functions include the recruitment of RNA polymerase II to the promoter bound DNA-TBP-TFIIB complex, decreasing the affinity of RNA polymerase II for non-specific DNA, allowing for the subsequent recruitment of TFIIE and TFIIH, and facilitating RNA polymerase II elongation. In Saccharomyces cerevisiae (strain ATCC 204508 / S288c) (Baker's yeast), this protein is Transcription initiation factor IIF subunit alpha (TFG1).